We begin with the raw amino-acid sequence, 526 residues long: Tyrosine 2,3-aminomutase (526 aa).

The active-site Proton donor/acceptor is tyrosine 41. Residue histidine 71 participates in substrate binding. Positions 130-132 (ASG) form a cross-link, 5-imidazolinone (Ala-Gly). Serine 131 carries the 2,3-didehydroalanine (Ser) modification. The substrate site is built by asparagine 183 and arginine 288.

It belongs to the TAL/TAM family. In terms of assembly, homotetramer; dimer of dimers. In terms of processing, contains an active site 4-methylidene-imidazol-5-one (MIO), which is formed autocatalytically by cyclization and dehydration of residues Ala-Ser-Gly.

The catalysed reaction is L-tyrosine = 3-amino-3-(4-hydroxyphenyl)propanoate. It carries out the reaction L-tyrosine = (E)-4-coumarate + NH4(+). In terms of biological role, has aminomutase and, to a much lesser extent, ammonia-lyase activity. Primarily, catalyzes the rearrangement of L-tyrosine to S-beta-tyrosine, which is probably incorporated into secondary metabolite myxovalargin. The aminomutase activity exclusively produces S-beta-tyrosine. This Myxococcus sp. (strain Mx-B0) protein is Tyrosine 2,3-aminomutase.